The primary structure comprises 1758 residues: uncharacterized protein (1758 aa).

The first 12 residues, 1–12, serve as a signal peptide directing secretion; the sequence is MCFFLGSRLAYA. The Autotransporter domain occupies 1465 to 1758; that stretch reads ENLYNNGMWI…SFILGGNYYF (294 aa).

The protein resides in the cell outer membrane. This is an uncharacterized protein from Escherichia coli (strain K12).